A 304-amino-acid chain; its full sequence is Splicing factor U2af small subunit B (304 aa).

Residues 12–40 (EKDRVNCPFYFKIGACRHGDRCSRLHNRP) form a C3H1-type 1 zinc finger. In terms of domain architecture, RRM spans 44–146 (PTIVLANMYQ…RPIIVEYSPV (103 aa)). The segment at 148 to 175 (DFREATCRQFEENSCNRGGYCNFMHVKQ) adopts a C3H1-type 2 zinc-finger fold. A compositionally biased stretch (basic residues) spans 184–207 (LYGGRSRRSHGRSRSPSPRHRRGN). The disordered stretch occupies residues 184 to 304 (LYGGRSRRSH…QWNREREEKP (121 aa)). Basic and acidic residues predominate over residues 208–220 (RDRDDFRRERDGY). The segment covering 221 to 258 (RGGGDGYRGGGGGGGGDGYRGGDSYRGGGGGGRRGGGS) has biased composition (gly residues). Over residues 268–280 (RRRHGSPPRRARS) the composition is skewed to basic residues. The span at 281-304 (PVRESSEERRAKIEQWNREREEKP) shows a compositional bias: basic and acidic residues.

Belongs to the splicing factor SR family.

Its subcellular location is the nucleus. Its function is as follows. Necessary for the splicing of pre-mRNA. The chain is Splicing factor U2af small subunit B (U2AF35B) from Oryza sativa subsp. japonica (Rice).